We begin with the raw amino-acid sequence, 390 residues long: S-adenosylmethionine synthase 1 (390 aa).

Glutamate 9 contributes to the Mg(2+) binding site. ATP is bound at residue histidine 15. Residue glutamate 43 participates in K(+) binding. Residues glutamate 56 and glutamine 99 each contribute to the L-methionine site. ATP is bound by residues 167–169 (DGK), 235–238 (SGRF), aspartate 246, 252–253 (RK), alanine 269, lysine 273, and lysine 277. Position 246 (aspartate 246) interacts with L-methionine. Lysine 277 serves as a coordination point for L-methionine.

Belongs to the AdoMet synthase family. In terms of assembly, homotetramer. The cofactor is Mn(2+). Mg(2+) serves as cofactor. It depends on Co(2+) as a cofactor. Requires K(+) as cofactor.

Its subcellular location is the cytoplasm. It carries out the reaction L-methionine + ATP + H2O = S-adenosyl-L-methionine + phosphate + diphosphate. It participates in amino-acid biosynthesis; S-adenosyl-L-methionine biosynthesis; S-adenosyl-L-methionine from L-methionine: step 1/1. Catalyzes the formation of S-adenosylmethionine from methionine and ATP. The reaction comprises two steps that are both catalyzed by the same enzyme: formation of S-adenosylmethionine (AdoMet) and triphosphate, and subsequent hydrolysis of the triphosphate. This is S-adenosylmethionine synthase 1 (SAMS1) from Nicotiana tabacum (Common tobacco).